We begin with the raw amino-acid sequence, 242 residues long: MSKIMNDIIQSLFPGNCFEELLINFNFFHPTCPKAVLSRGLGFAITLGSILLFVPQILKIQAARSAQGISAASQLLALVGAIGTASYSYRSGFVFSGWGDSFFVAVQLVIIILQIFLFSGQTMLSVGFLGIVSAVAYGVVSKSIPMQTLTAVQTAGIPIVVVSKLLQISQNYRAQSTGQLSLISVFLQFAGTLARVFTSVQDTGDMLLIVSYSTAAVLNGLIFAQFFMYWSHSESAAKKKRN.

The 59-residue stretch at leucine 37 to phenylalanine 95 folds into the PQ-loop 1 domain. 7 helical membrane-spanning segments follow: residues glycine 40 to isoleucine 60, glycine 68 to serine 88, tryptophan 98 to phenylalanine 118, glycine 120 to valine 140, threonine 148 to isoleucine 168, leucine 180 to valine 200, and leucine 207 to phenylalanine 227. The PQ-loop 2 domain maps to valine 152 to aspartate 202.

This sequence belongs to the MPDU1 (TC 2.A.43.3) family.

Its subcellular location is the membrane. The chain is Mannose-P-dolichol utilization defect 1 protein homolog from Caenorhabditis elegans.